The sequence spans 375 residues: Platelet-derived growth factor receptor-like protein (375 aa).

An N-terminal signal peptide occupies residues 1–21 (MKVWLLLGLLLVHEALEDVTG). Residues 22–64 (QHLPKNKRPKEPGENRIKPTNKKVKPKIPKIKDRDSADSTPKT) are disordered. The span at 40 to 50 (PTNKKVKPKIP) shows a compositional bias: basic residues. In terms of domain architecture, Ig-like C2-type 1 spans 62 to 159 (PKTQSIMMQV…GYICRKDETK (98 aa)). A disulfide bond links cysteine 96 and cysteine 143. 2 N-linked (GlcNAc...) asparagine glycosylation sites follow: asparagine 132 and asparagine 219. Residues 272-375 (PSTTILASSN…TTVATTVEFS (104 aa)) enclose the Ig-like C2-type 2 domain. Cysteine 293 and cysteine 357 form a disulfide bridge.

As to quaternary structure, forms a complex composed of PDGFRL, TNK2 and GRB2.

The protein localises to the secreted. The protein is Platelet-derived growth factor receptor-like protein (PDGFRL) of Macaca fascicularis (Crab-eating macaque).